The sequence spans 380 residues: Chaperone protein DnaJ (380 aa).

Residues 4–69 enclose the J domain; sequence DYYEILGVTR…QKRAAYDRFG (66 aa). The segment at 135 to 213 adopts a CR-type zinc-finger fold; that stretch reads GKTAQINIPS…CQGTRRVEKN (79 aa). 8 residues coordinate Zn(2+): cysteine 148, cysteine 151, cysteine 165, cysteine 168, cysteine 187, cysteine 190, cysteine 201, and cysteine 204. CXXCXGXG motif repeat units lie at residues 148–155, 165–172, 187–194, and 201–208; these read CDSCEGSG, CGTCHGAG, CHACNGRG, and CPKCQGTR.

It belongs to the DnaJ family. Homodimer. Zn(2+) is required as a cofactor.

It localises to the cytoplasm. In terms of biological role, participates actively in the response to hyperosmotic and heat shock by preventing the aggregation of stress-denatured proteins and by disaggregating proteins, also in an autonomous, DnaK-independent fashion. Unfolded proteins bind initially to DnaJ; upon interaction with the DnaJ-bound protein, DnaK hydrolyzes its bound ATP, resulting in the formation of a stable complex. GrpE releases ADP from DnaK; ATP binding to DnaK triggers the release of the substrate protein, thus completing the reaction cycle. Several rounds of ATP-dependent interactions between DnaJ, DnaK and GrpE are required for fully efficient folding. Also involved, together with DnaK and GrpE, in the DNA replication of plasmids through activation of initiation proteins. The protein is Chaperone protein DnaJ of Bartonella quintana (strain Toulouse) (Rochalimaea quintana).